Reading from the N-terminus, the 285-residue chain is Pseudouridine-5'-phosphate glycosidase (285 aa).

The active-site Proton donor is Glu-17. Lys-77 and Val-97 together coordinate substrate. Asp-126 contributes to the Mn(2+) binding site. Substrate is bound at residue Ser-128–Asp-130. Residue Lys-147 is the Nucleophile of the active site.

It belongs to the pseudouridine-5'-phosphate glycosidase family. As to quaternary structure, homotrimer. Requires Mn(2+) as cofactor.

It catalyses the reaction D-ribose 5-phosphate + uracil = psi-UMP + H2O. Catalyzes the reversible cleavage of pseudouridine 5'-phosphate (PsiMP) to ribose 5-phosphate and uracil. Functions biologically in the cleavage direction, as part of a pseudouridine degradation pathway. The sequence is that of Pseudouridine-5'-phosphate glycosidase from Thermotoga maritima (strain ATCC 43589 / DSM 3109 / JCM 10099 / NBRC 100826 / MSB8).